Reading from the N-terminus, the 328-residue chain is Beta-ribofuranosylphenol 5'-phosphate synthase (328 aa).

Belongs to the beta-RFA-P synthase family. Homodimer. The cofactor is Mg(2+).

It catalyses the reaction 5-phospho-alpha-D-ribose 1-diphosphate + 4-hydroxybenzoate + H(+) = 4-(beta-D-ribofuranosyl)phenol 5'-phosphate + CO2 + diphosphate. The catalysed reaction is 4-aminobenzoate + 5-phospho-alpha-D-ribose 1-diphosphate + H(+) = 4-(beta-D-ribofuranosyl)aminobenzene 5'-phosphate + CO2 + diphosphate. The protein operates within cofactor biosynthesis; 5,6,7,8-tetrahydromethanopterin biosynthesis. Functionally, catalyzes the condensation of 4-hydroxybenzoate (HB) with 5-phospho-alpha-D-ribose 1-diphosphate (PRPP) to produce beta-ribofuranosylphenol 5'-phosphate (beta-RFH-P). Also catalyzes the condensation of 4-aminobenzoate (pABA) with PRPP to produce beta-ribofuranosylaminobenzene 5'-phosphate (beta-RFA-P). Only 4-hydroxybenzoate is known to be biosynthesized by methanogenic archaea, but 4-aminobenzoate can be used as substrate by growing methanogens when it is present in the growth medium. This is Beta-ribofuranosylphenol 5'-phosphate synthase from Methanocaldococcus jannaschii (strain ATCC 43067 / DSM 2661 / JAL-1 / JCM 10045 / NBRC 100440) (Methanococcus jannaschii).